The sequence spans 77 residues: MATRSVLLALVVLNLLFYVPPGRSGPNVYIQKIFASCWRLQGTCRPKCLKNEQYRILCDTIHLCCVNPKYLPILTGK.

An N-terminal signal peptide occupies residues 1 to 24 (MATRSVLLALVVLNLLFYVPPGRS). 3 disulfides stabilise this stretch: C37-C64, C44-C58, and C48-C65.

This sequence belongs to the beta-defensin family.

It is found in the secreted. Has antibacterial activity. The sequence is that of Beta-defensin 135 (DEFB135) from Homo sapiens (Human).